The following is a 613-amino-acid chain: Dihydroxy-acid dehydratase (613 aa).

Aspartate 81 is a binding site for Mg(2+). Cysteine 122 is a [2Fe-2S] cluster binding site. Mg(2+) contacts are provided by aspartate 123 and lysine 124. Lysine 124 bears the N6-carboxylysine mark. Cysteine 193 provides a ligand contact to [2Fe-2S] cluster. Glutamate 489 is a binding site for Mg(2+). Serine 515 functions as the Proton acceptor in the catalytic mechanism.

It belongs to the IlvD/Edd family. As to quaternary structure, homodimer. [2Fe-2S] cluster serves as cofactor. Mg(2+) is required as a cofactor.

It catalyses the reaction (2R)-2,3-dihydroxy-3-methylbutanoate = 3-methyl-2-oxobutanoate + H2O. It carries out the reaction (2R,3R)-2,3-dihydroxy-3-methylpentanoate = (S)-3-methyl-2-oxopentanoate + H2O. Its pathway is amino-acid biosynthesis; L-isoleucine biosynthesis; L-isoleucine from 2-oxobutanoate: step 3/4. It participates in amino-acid biosynthesis; L-valine biosynthesis; L-valine from pyruvate: step 3/4. Functions in the biosynthesis of branched-chain amino acids. Catalyzes the dehydration of (2R,3R)-2,3-dihydroxy-3-methylpentanoate (2,3-dihydroxy-3-methylvalerate) into 2-oxo-3-methylpentanoate (2-oxo-3-methylvalerate) and of (2R)-2,3-dihydroxy-3-methylbutanoate (2,3-dihydroxyisovalerate) into 2-oxo-3-methylbutanoate (2-oxoisovalerate), the penultimate precursor to L-isoleucine and L-valine, respectively. The sequence is that of Dihydroxy-acid dehydratase from Pseudomonas fluorescens (strain SBW25).